The chain runs to 198 residues: Phosphoheptose isomerase (198 aa).

An SIS domain is found at 36-198; the sequence is MARALGADRK…DRTLFGGPGG (163 aa). 51–53 contacts substrate; the sequence is NGG. Zn(2+) contacts are provided by histidine 60 and glutamate 64. Substrate is bound by residues glutamate 64, 93 to 94, 119 to 121, serine 124, and glutamine 174; these read ND and STS. Zn(2+)-binding residues include glutamine 174 and histidine 182.

Belongs to the SIS family. GmhA subfamily. As to quaternary structure, homotetramer. It depends on Zn(2+) as a cofactor.

The protein localises to the cytoplasm. The enzyme catalyses 2 D-sedoheptulose 7-phosphate = D-glycero-alpha-D-manno-heptose 7-phosphate + D-glycero-beta-D-manno-heptose 7-phosphate. It participates in carbohydrate biosynthesis; D-glycero-D-manno-heptose 7-phosphate biosynthesis; D-glycero-alpha-D-manno-heptose 7-phosphate and D-glycero-beta-D-manno-heptose 7-phosphate from sedoheptulose 7-phosphate: step 1/1. Catalyzes the isomerization of sedoheptulose 7-phosphate in D-glycero-D-manno-heptose 7-phosphate. The polypeptide is Phosphoheptose isomerase (Halorhodospira halophila (strain DSM 244 / SL1) (Ectothiorhodospira halophila (strain DSM 244 / SL1))).